The sequence spans 579 residues: Folliculin (579 aa).

Positions 31 to 82 (QGAGSGDSPDQVEQAEEEEGGIQMSSRVRAHSPAEGASSESSSPGPKKSDMC) are disordered. Phosphoserine is present on residues serine 62 and serine 73. Positions 63–76 (PAEGASSESSSPGP) are enriched in low complexity. The uDENN FLCN/SMCR8-type domain maps to 86–242 (RSLAVGHPGY…RNGNAARSLT (157 aa)). Residues 287-310 (EKLADLEEESESWDNSEAEEEEKA) are a coiled coil. Residues 294–308 (EESESWDNSEAEEEE) show a composition bias toward acidic residues. The interval 294–323 (EESESWDNSEAEEEEKAPVTPEGAEGRELT) is disordered. Serine 302, serine 406, serine 537, serine 542, and serine 571 each carry phosphoserine. The cDENN FLCN/SMCR8-type domain occupies 339–491 (QPPKLTGFKS…ILNKIEAALT (153 aa)). The dDENN FLCN/SMCR8-type domain occupies 493 to 558 (QNLSVDVVDQ…LLKFWMTGLS (66 aa)).

The protein belongs to the folliculin family. As to quaternary structure, interacts (via C-terminus) with FNIP1 or FNIP2 (via C-terminus). Component of the lysosomal folliculin complex (LFC), composed of FLCN, FNIP1 (or FNIP2), RagA/RRAGA or RagB/RRAGB GDP-bound, RagC/RRAGC or RagD/RRAGD GTP-bound, and Ragulator. Interaction with FNIP1 or FNIP2 mediates indirect interaction with the PRKAA1, PRKAB1 and PRKAG1 subunits of 5'-AMP-activated protein kinase (AMPK). Interacts with HSP90AA1 in the presence of FNIP1. Interacts with HSP70, STUB1, CDC37, AHSA1, CCT2, STIP1, PTGES3 and PPP5C. Interacts with GABARAP; interaction takes place in the presence of FNIP1 and/or FNIP2. Interacts with RILP; the interaction is direct and promotes association between RILP and RAB34. Interacts with KIF3A and KIF3B. Interacts with lactate dehydrogenase LDHA, but not LDHB; the interaction is direct, may preferentially bind LDHA dimers rather than tetramers, and regulates LDHA activity, acting as an uncompetitive inhibitor. Post-translationally, phosphorylation by ULK1 modulates the interaction with GABARAP and is required to regulate autophagy. As to expression, highly expressed in adult heart, pancreas, and prostate with moderate expression in adult brain, kidney, liver, adipose tissue and lung.

The protein resides in the lysosome membrane. It is found in the cytoplasm. The protein localises to the cytosol. It localises to the cell projection. Its subcellular location is the cilium. The protein resides in the cytoskeleton. It is found in the microtubule organizing center. The protein localises to the centrosome. It localises to the spindle. Its subcellular location is the nucleus. GTPase-activating activity is inhibited in the folliculin complex (LFC), which stabilizes the GDP-bound state of RagA/RRAGA (or RagB/RRAGB), because Arg-164 is located far from the RagC/RRAGC or RagD/RRAGD nucleotide pocket. Disassembly of the LFC complex upon amino acid restimulation liberates the GTPase-activating activity. Multi-functional protein, involved in both the cellular response to amino acid availability and in the regulation of glycolysis. GTPase-activating protein that plays a key role in the cellular response to amino acid availability through regulation of the non-canonical mTORC1 signaling cascade controlling the MiT/TFE factors TFEB and TFE3. Activates mTORC1 by acting as a GTPase-activating protein: specifically stimulates GTP hydrolysis by RagC/RRAGC or RagD/RRAGD, promoting the conversion to the GDP-bound state of RagC/RRAGC or RagD/RRAGD, and thereby activating the kinase activity of mTORC1. The GTPase-activating activity is inhibited during starvation and activated in presence of nutrients. Acts as a key component for non-canonical mTORC1-dependent control of the MiT/TFE factors TFEB and TFE3, while it is not involved in mTORC1-dependent phosphorylation of canonical RPS6KB1/S6K1 and EIF4EBP1/4E-BP1. In low-amino acid conditions, the lysosomal folliculin complex (LFC) is formed on the membrane of lysosomes, which inhibits the GTPase-activating activity of FLCN, inactivates mTORC1 and maximizes nuclear translocation of TFEB and TFE3. Upon amino acid restimulation, RagA/RRAGA (or RagB/RRAGB) nucleotide exchange promotes disassembly of the LFC complex and liberates the GTPase-activating activity of FLCN, leading to activation of mTORC1 and subsequent cytoplasmic retention of TFEB and TFE3. Indirectly acts as a positive regulator of Wnt signaling by promoting mTOR-dependent cytoplasmic retention of MiT/TFE factor TFE3. Required for the exit of hematopoietic stem cell from pluripotency by promoting mTOR-dependent cytoplasmic retention of TFE3, thereby increasing Wnt signaling. Involved in the control of embryonic stem cells differentiation; together with LAMTOR1 it is necessary to recruit and activate RagC/RRAGC and RagD/RRAGD at the lysosomes, and to induce exit of embryonic stem cells from pluripotency via non-canonical, mTOR-independent TFE3 inactivation. Acts as an inhibitor of browning of adipose tissue by regulating mTOR-dependent cytoplasmic retention of TFE3. In response to flow stress, regulates STK11/LKB1 accumulation and mTORC1 activation through primary cilia: may act by recruiting STK11/LKB1 to primary cilia for activation of AMPK resided at basal bodies, causing mTORC1 down-regulation. Together with FNIP1 and/or FNIP2, regulates autophagy: following phosphorylation by ULK1, interacts with GABARAP and promotes autophagy. Required for starvation-induced perinuclear clustering of lysosomes by promoting association of RILP with its effector RAB34. Regulates glycolysis by binding to lactate dehydrogenase LDHA, acting as an uncompetitive inhibitor. This Mus musculus (Mouse) protein is Folliculin.